Consider the following 87-residue polypeptide: MANIKSAKKRAVQSEKRRQHNASQRSMMRTYIKKVYAAVAAGEKSAAQAAFLEMQKVVDRMASKGLIHANKAANHKSKLSAQIKKLA.

Residues 1–11 (MANIKSAKKRA) are compositionally biased toward basic residues. Residues 1–27 (MANIKSAKKRAVQSEKRRQHNASQRSM) are disordered.

This sequence belongs to the bacterial ribosomal protein bS20 family.

Its function is as follows. Binds directly to 16S ribosomal RNA. The protein is Small ribosomal subunit protein bS20 of Actinobacillus succinogenes (strain ATCC 55618 / DSM 22257 / CCUG 43843 / 130Z).